The chain runs to 212 residues: ER lumen protein-retaining receptor 2 (212 aa).

Over 1–4 (MNIF) the chain is Lumenal. The helical transmembrane segment at 5 to 24 (RLTGDLSHLAAIIILLLKIW) threads the bilayer. Residues 25–32 (KSRSCAGI) lie on the Cytoplasmic side of the membrane. A helical membrane pass occupies residues 33-52 (SGKSQILFALVFTTRYLDLL). Residues 47-48 (RY) are interaction with the K-D-E-L motif on target proteins. Topologically, residues 53-58 (TSFISL) are lumenal. Residues 59-79 (YNTCMKVIYIGCAYATVYLIY) form a helical membrane-spanning segment. At 80–92 (AKFRATYDGNHDT) the chain is on the cytoplasmic side. The chain crosses the membrane as a helical span at residues 93–110 (FRAEFLVVPVGGLAFLVN). Topologically, residues 111-116 (HDFSPL) are lumenal. A helical membrane pass occupies residues 117–135 (EILWTFSIYLESVAILPQL). Over 136-149 (FMISKTGEAETITT) the chain is Cytoplasmic. The chain crosses the membrane as a helical span at residues 150 to 168 (HYLFCLGVYRALYLFNWIW). The interval 159–169 (RALYLFNWIWR) is interaction with the K-D-E-L motif on target proteins. Residues 169-178 (RFYFEGFFDM) are Lumenal-facing. Residues 179-199 (IAIVAGVVQTILYCDFFYLYV) traverse the membrane as a helical segment. The Cytoplasmic segment spans residues 200 to 212 (TKVLKGKKLSLPA). An important for recycling of cargo proteins with the sequence motif K-D-E-L from the Golgi to the endoplasmic reticulum region spans residues 204–207 (KGKK).

Belongs to the ERD2 family.

Its subcellular location is the endoplasmic reticulum membrane. It is found in the golgi apparatus membrane. The protein localises to the cytoplasmic vesicle. It localises to the COPI-coated vesicle membrane. Functionally, receptor for the C-terminal sequence motif K-D-E-L that is present on endoplasmic reticulum resident proteins and that mediates their recycling from the Golgi back to the endoplasmic reticulum. Binding is pH dependent, and is optimal at pH 5-5.4. This Danio rerio (Zebrafish) protein is ER lumen protein-retaining receptor 2 (kdelr2).